A 52-amino-acid polypeptide reads, in one-letter code: uncharacterized protein (52 aa).

This is an uncharacterized protein from Bos taurus papillomavirus 4 (Bovine papillomavirus 4).